A 128-amino-acid chain; its full sequence is Sulfurtransferase TusD (128 aa).

The Cysteine persulfide intermediate role is filled by cysteine 78.

It belongs to the DsrE/TusD family. Heterohexamer, formed by a dimer of trimers. The hexameric TusBCD complex contains 2 copies each of TusB, TusC and TusD. The TusBCD complex interacts with TusE.

Its subcellular location is the cytoplasm. Its function is as follows. Part of a sulfur-relay system required for 2-thiolation of 5-methylaminomethyl-2-thiouridine (mnm(5)s(2)U) at tRNA wobble positions. Accepts sulfur from TusA and transfers it in turn to TusE. This chain is Sulfurtransferase TusD, found in Salmonella agona (strain SL483).